Here is a 182-residue protein sequence, read N- to C-terminus: Transcription termination/antitermination protein NusG (182 aa).

The region spanning 131 to 163 (VGEQVRIQSGPFANQIGEVQEIEADKFKLTVLV) is the KOW domain.

It belongs to the NusG family.

Functionally, participates in transcription elongation, termination and antitermination. The protein is Transcription termination/antitermination protein NusG of Staphylococcus epidermidis (strain ATCC 35984 / DSM 28319 / BCRC 17069 / CCUG 31568 / BM 3577 / RP62A).